Consider the following 246-residue polypeptide: Probable aquaporin AqpM (246 aa).

At 1-12 (MTMTLAKRFTAE) the chain is on the cytoplasmic side. The helical transmembrane segment at 13 to 33 (VVGTFILVFFGPGAAVITLMI) threads the bilayer. Over 34–56 (ANGADKPNEFNIGIGALGGLGDW) the chain is Extracellular. Residues 57–77 (FAIGMAFALAIAAVIYSLGRI) form a helical membrane-spanning segment. Residues 78–104 (SGAHINPAVTIALWSIGRFPGREVVPY) are Cytoplasmic-facing. The short motif at 83–85 (NPA) is the NPA 1 element. The chain crosses the membrane as a helical span at residues 105–125 (IVAQFIGAALGSLLFLACVGP). The Extracellular portion of the chain corresponds to 126 to 146 (AAATVGGLGATAPFPGIGYGQ). Residues 147–167 (AILTEAIGTFLLMLVIMGVAV) form a helical membrane-spanning segment. The Cytoplasmic portion of the chain corresponds to 168–173 (DERAPP). Residues 174–194 (GFAGLVIGLTVGGIITTIGNI) form a helical membrane-spanning segment. Over 195–217 (TGSSLNPARTFGPYLGDSLMGIN) the chain is Extracellular. Positions 200 to 202 (NPA) match the NPA 2 motif. Residues 218 to 238 (LWQYFPIYVIGPIVGAVAAAW) form a helical membrane-spanning segment. The Cytoplasmic segment spans residues 239 to 246 (LYNYLAKE).

Belongs to the MIP/aquaporin (TC 1.A.8) family.

The protein localises to the cell membrane. Its function is as follows. Channel that permits osmotically driven movement of water in both directions. In Archaeoglobus fulgidus (strain ATCC 49558 / DSM 4304 / JCM 9628 / NBRC 100126 / VC-16), this protein is Probable aquaporin AqpM (aqpM).